Here is a 142-residue protein sequence, read N- to C-terminus: Large ribosomal subunit protein uL11 (142 aa).

It belongs to the universal ribosomal protein uL11 family. As to quaternary structure, part of the ribosomal stalk of the 50S ribosomal subunit. Interacts with L10 and the large rRNA to form the base of the stalk. L10 forms an elongated spine to which L12 dimers bind in a sequential fashion forming a multimeric L10(L12)X complex. Post-translationally, one or more lysine residues are methylated.

In terms of biological role, forms part of the ribosomal stalk which helps the ribosome interact with GTP-bound translation factors. The protein is Large ribosomal subunit protein uL11 of Magnetococcus marinus (strain ATCC BAA-1437 / JCM 17883 / MC-1).